The following is a 373-amino-acid chain: Histidinol-phosphate aminotransferase (373 aa).

At Lys-231 the chain carries N6-(pyridoxal phosphate)lysine.

It belongs to the class-II pyridoxal-phosphate-dependent aminotransferase family. Histidinol-phosphate aminotransferase subfamily. Pyridoxal 5'-phosphate serves as cofactor.

It catalyses the reaction L-histidinol phosphate + 2-oxoglutarate = 3-(imidazol-4-yl)-2-oxopropyl phosphate + L-glutamate. It functions in the pathway amino-acid biosynthesis; L-histidine biosynthesis; L-histidine from 5-phospho-alpha-D-ribose 1-diphosphate: step 7/9. This chain is Histidinol-phosphate aminotransferase (hisC), found in Methanocaldococcus jannaschii (strain ATCC 43067 / DSM 2661 / JAL-1 / JCM 10045 / NBRC 100440) (Methanococcus jannaschii).